Consider the following 194-residue polypeptide: Ribonuclease VapC1 (194 aa).

One can recognise a PINc domain in the interval 34–134; that stretch reads YVIDTSAIIS…TDDYSIQNVA (101 aa). Mg(2+) contacts are provided by Asp37 and Asp150.

Belongs to the PINc/VapC protein family. It depends on Mg(2+) as a cofactor.

In terms of biological role, toxic component of a type II toxin-antitoxin (TA) system. An RNase. This Thermoplasma acidophilum (strain ATCC 25905 / DSM 1728 / JCM 9062 / NBRC 15155 / AMRC-C165) protein is Ribonuclease VapC1.